Here is a 621-residue protein sequence, read N- to C-terminus: Chaperone protein HscA homolog (621 aa).

The protein belongs to the heat shock protein 70 family.

In terms of biological role, chaperone involved in the maturation of iron-sulfur cluster-containing proteins. Has a low intrinsic ATPase activity which is markedly stimulated by HscB. The chain is Chaperone protein HscA homolog from Cupriavidus pinatubonensis (strain JMP 134 / LMG 1197) (Cupriavidus necator (strain JMP 134)).